We begin with the raw amino-acid sequence, 822 residues long: Probable phosphoketolase (822 aa).

The protein belongs to the XFP family. Requires thiamine diphosphate as cofactor.

The chain is Probable phosphoketolase from Nocardia farcinica (strain IFM 10152).